We begin with the raw amino-acid sequence, 199 residues long: Probable GTP-binding protein EngB (199 aa).

The region spanning 28–199 is the EngB-type G domain; it reads DIPEIALAGR…QAWDAILEQI (172 aa). GTP contacts are provided by residues 36-43, 63-67, 81-84, 148-151, and 180-182; these read GRSNVGKS, GKTQL, DVPG, TKAD, and FSS. Residues S43 and T65 each contribute to the Mg(2+) site.

The protein belongs to the TRAFAC class TrmE-Era-EngA-EngB-Septin-like GTPase superfamily. EngB GTPase family. It depends on Mg(2+) as a cofactor.

Its function is as follows. Necessary for normal cell division and for the maintenance of normal septation. This chain is Probable GTP-binding protein EngB, found in Streptococcus uberis (strain ATCC BAA-854 / 0140J).